Reading from the N-terminus, the 623-residue chain is tRNA uridine 5-carboxymethylaminomethyl modification enzyme MnmG (623 aa).

12–17 (GAGHAG) contributes to the FAD binding site. Residue 272–286 (GPRYCPSIEDKINRF) participates in NAD(+) binding.

Belongs to the MnmG family. Homodimer. Heterotetramer of two MnmE and two MnmG subunits. It depends on FAD as a cofactor.

It is found in the cytoplasm. Functionally, NAD-binding protein involved in the addition of a carboxymethylaminomethyl (cmnm) group at the wobble position (U34) of certain tRNAs, forming tRNA-cmnm(5)s(2)U34. The polypeptide is tRNA uridine 5-carboxymethylaminomethyl modification enzyme MnmG (Flavobacterium johnsoniae (strain ATCC 17061 / DSM 2064 / JCM 8514 / BCRC 14874 / CCUG 350202 / NBRC 14942 / NCIMB 11054 / UW101) (Cytophaga johnsonae)).